Reading from the N-terminus, the 644-residue chain is uncharacterized protein (644 aa).

Disordered regions lie at residues 1–35 and 48–106; these read MSSH…EYCS and GNSH…SHHN. Phosphoserine is present on Ser28. Residues 58–70 are compositionally biased toward low complexity; it reads NGASSSNNNVAKS. Positions 83–106 are enriched in polar residues; it reads YDSTSNSNEPISFNEPDSSNSHHN. A run of 12 helical transmembrane segments spans residues 131–151, 190–210, 218–238, 245–265, 286–306, 314–334, 398–418, 435–455, 522–542, 546–566, 583–603, and 614–634; these read ILPL…PLLF, AAFG…YGTM, LVLF…LYQS, YFVL…TVVA, LNFA…GFIV, YVFY…WLIL, VLLA…MGLL, LILS…FPLL, VWNA…LAVA, VALF…PCVQ, AAFA…YAFV, and NMIF…IFFM.

The protein resides in the membrane. This is an uncharacterized protein from Schizosaccharomyces pombe (strain 972 / ATCC 24843) (Fission yeast).